The sequence spans 142 residues: Transcriptional regulator MraZ (142 aa).

2 consecutive SpoVT-AbrB domains span residues 5–51 (ASAL…PRPE) and 77–120 (AMDV…DAQT).

The protein belongs to the MraZ family. In terms of assembly, forms oligomers.

Its subcellular location is the cytoplasm. The protein resides in the nucleoid. This is Transcriptional regulator MraZ from Paraburkholderia phytofirmans (strain DSM 17436 / LMG 22146 / PsJN) (Burkholderia phytofirmans).